Consider the following 438-residue polypeptide: Glutaryl-CoA dehydrogenase, mitochondrial (438 aa).

A mitochondrion-targeting transit peptide spans 1–44 (MALRGVYAQLLNRGPGLRVFRSWSSATAQTEKGEKTQSRSAKPS). Substrate is bound by residues 138 to 139 (RS) and S186. Residues 177-186 (FGLTEPNHGS), S186, and 212-214 (WIT) each bind FAD. K240 carries the N6-acetyllysine modification. 287-294 (FGCLNNAR) lines the substrate pocket. FAD-binding positions include R319, Q330, and 387–391 (DMLGG). The Proton acceptor role is filled by E414. G415 is a binding site for substrate. FAD is bound by residues T416, 416-418 (THD), and F434.

This sequence belongs to the acyl-CoA dehydrogenase family. In terms of assembly, homotetramer. It depends on FAD as a cofactor.

It localises to the mitochondrion matrix. The catalysed reaction is glutaryl-CoA + oxidized [electron-transfer flavoprotein] + 2 H(+) = (2E)-butenoyl-CoA + reduced [electron-transfer flavoprotein] + CO2. It participates in amino-acid metabolism; lysine degradation. The protein operates within amino-acid metabolism; tryptophan metabolism. In terms of biological role, catalyzes the oxidative decarboxylation of glutaryl-CoA to crotonyl-CoA and CO(2) in the degradative pathway of L-lysine, L-hydroxylysine, and L-tryptophan metabolism. It uses electron transfer flavoprotein as its electron acceptor. This Bos taurus (Bovine) protein is Glutaryl-CoA dehydrogenase, mitochondrial (GCDH).